A 538-amino-acid chain; its full sequence is uncharacterized protein (538 aa).

The span at M1–S13 shows a compositional bias: low complexity. The disordered stretch occupies residues M1–F43. 12 helical membrane passes run I97–F117, V134–A154, K163–A183, F194–M214, I226–A246, W254–K274, P328–L348, A367–F387, L408–S428, V434–F454, L458–I478, and G504–F524.

This sequence belongs to the major facilitator superfamily. CAR1 family.

It localises to the endoplasmic reticulum. It is found in the membrane. This is an uncharacterized protein from Schizosaccharomyces pombe (strain 972 / ATCC 24843) (Fission yeast).